A 296-amino-acid chain; its full sequence is MYFQDIISTLNRFWADQGCLLLQPYDTEKGAGTMSPHTVLRAIGPEPWAVAYPEPCRRPTDGRYGDNPNRAQHYFQYQVLIKPSPDGIQETYLASLEALGIKAADHDIRFVEDNWESPTLGAWGVGWEVWLDGMEVTQFTYFQQCGGIDCKPVSIEITYGLERLAMYLQDVESIWDLSWNSERSYGEIWLPFEKGQCHFNFEASNPERLKQLFAIYEAEAADLIEKQLPAPALDFVLKCSHTFNLLEARGVISVTERTATIVRIRNLARKVAEAWLAEREALGFPLLKGGTLETAA.

The protein belongs to the class-II aminoacyl-tRNA synthetase family. In terms of assembly, tetramer of two alpha and two beta subunits.

The protein resides in the cytoplasm. It carries out the reaction tRNA(Gly) + glycine + ATP = glycyl-tRNA(Gly) + AMP + diphosphate. The sequence is that of Glycine--tRNA ligase alpha subunit from Synechococcus sp. (strain CC9605).